We begin with the raw amino-acid sequence, 329 residues long: Prostaglandin reductase 1 (329 aa).

At T18 the chain carries Phosphothreonine. Position 20 is a phosphoserine (S20). NADP(+)-binding positions include 152 to 155, K178, Y193, N217, 239 to 245, 270 to 272, and N321; these read GAVG, CGAISVY, and FIV. Residue K178 is modified to N6-(2-hydroxyisobutyryl)lysine; alternate. Residue K178 is modified to N6-acetyllysine; alternate.

This sequence belongs to the NADP-dependent oxidoreductase L4BD family. In terms of assembly, monomer or homodimer. As to expression, detected in small intestine, kidney, liver, spleen and stomach (at protein level). Detected in small intestine, kidney and liver.

It is found in the cytoplasm. It catalyses the reaction 13,14-dihydro-15-oxo-prostaglandin E1 + NADP(+) = 15-oxoprostaglandin E1 + NADPH + H(+). The enzyme catalyses 13,14-dihydro-15-oxo-prostaglandin E2 + NAD(+) = 15-oxoprostaglandin E2 + NADH + H(+). The catalysed reaction is 13,14-dihydro-15-oxo-prostaglandin F1alpha + NADP(+) = 15-oxoprostaglandin F1alpha + NADPH + H(+). It carries out the reaction 13,14-dihydro-15-oxo-PGF2alpha + NADP(+) = 15-oxoprostaglandin F2alpha + NADPH + H(+). It catalyses the reaction leukotriene B4 + NADP(+) = 12-oxo-leukotriene B4 + NADPH + H(+). The enzyme catalyses 20-hydroxy-leukotriene B4 + NADP(+) = 12-oxo-20-hydroxy-leukotriene B4 + NADPH + H(+). The catalysed reaction is 6-trans-leukotriene B4 + NADP(+) = 12-oxo-(5S)-hydroxy-(6E,8E,10E,14Z)-eicosatetraenoate + NADPH + H(+). It carries out the reaction (5S,12S)-dihydroxy-(6E,10E,12E,14Z)-eicosatetraenoate + NADP(+) = 12-oxo-(5S)-hydroxy-(6E,8E,10E,14Z)-eicosatetraenoate + NADPH + H(+). It catalyses the reaction an n-alkanal + NADP(+) = an alk-2-enal + NADPH + H(+). The enzyme catalyses hexanal + NADP(+) = (E)-hex-2-enal + NADPH + H(+). The catalysed reaction is octanal + NADP(+) = (2E)-octenal + NADPH + H(+). It carries out the reaction decanal + NADP(+) = (2E)-decenal + NADPH + H(+). It catalyses the reaction dodecanal + NADP(+) = (2E)-dodecenal + NADPH + H(+). The enzyme catalyses 4-hydroxynonanal + NADP(+) = (E)-4-hydroxynon-2-enal + NADPH + H(+). The catalysed reaction is pentan-2-one + NADP(+) = (E)-pent-3-en-2-one + NADPH + H(+). It carries out the reaction nonan-2-one + NADP(+) = (3E)-nonen-2-one + NADPH + H(+). NAD(P)H-dependent oxidoreductase involved in metabolic inactivation of pro- and anti-inflammatory eicosanoids: prostaglandins (PG), leukotrienes (LT) and lipoxins (LX). Catalyzes with high efficiency the reduction of the 13,14 double bond of 15-oxoPGs, including 15-oxo-PGE1, 15-oxo-PGE2, 15-oxo-PGF1-alpha and 15-oxo-PGF2-alpha. Catalyzes with lower efficiency the oxidation of the hydroxyl group at C12 of LTB4 and its derivatives, converting them into biologically less active 12-oxo-LTB4 metabolites. Reduces 15-oxo-LXA4 to 13,14 dihydro-15-oxo-LXA4, enhancing neutrophil recruitment at the inflammatory site. Plays a role in metabolic detoxification of alkenals and ketones. Reduces alpha,beta-unsaturated alkenals and ketones, particularly those with medium-chain length, showing highest affinity toward (2E)-decenal and (3E)-3-nonen-2-one. May inactivate 4-hydroxy-2-nonenal, a cytotoxic lipid constituent of oxidized low-density lipoprotein particles. This Cavia porcellus (Guinea pig) protein is Prostaglandin reductase 1 (Ptgr1).